We begin with the raw amino-acid sequence, 958 residues long: UPF0182 protein TW644 (958 aa).

Helical transmembrane passes span 14 to 34, 59 to 79, 107 to 127, 166 to 186, 205 to 225, 249 to 269, and 280 to 300; these read IAILSVVAFLVLIALTAFFLV, IFVVFCLAFVFVSIFLWLCMF, KIVVLLVSLGLGAVAGIFAAS, LFFLLVTFVLGGILSILISVV, VQYAVLAAGIFVLLGLEFWLN, LIPGFAVLALVALGVALLFCI, and IIGVALAVVSALVVITALPWG.

It belongs to the UPF0182 family.

It localises to the cell membrane. This is UPF0182 protein TW644 from Tropheryma whipplei (strain TW08/27) (Whipple's bacillus).